Reading from the N-terminus, the 321-residue chain is Glucokinase (321 aa).

8–13 (ADIGGT) is a binding site for ATP.

This sequence belongs to the bacterial glucokinase family.

The protein resides in the cytoplasm. The catalysed reaction is D-glucose + ATP = D-glucose 6-phosphate + ADP + H(+). The chain is Glucokinase from Photorhabdus laumondii subsp. laumondii (strain DSM 15139 / CIP 105565 / TT01) (Photorhabdus luminescens subsp. laumondii).